The primary structure comprises 469 residues: Histone chaperone rtt-106 (469 aa).

Disordered stretches follow at residues 54 to 73 (EEPA…PNGA) and 364 to 469 (MAEQ…EGEE). Composition is skewed to basic and acidic residues over residues 364 to 379 (MAEQ…ENAK) and 402 to 415 (ELER…QRLQ). Acidic residues-rich tracts occupy residues 416–433 (DEED…EGES) and 440–469 (SEEE…EGEE).

It belongs to the RTT106 family. Interacts with histones H3 and H4.

It localises to the nucleus. The protein resides in the chromosome. Its function is as follows. Histones H3 and H4 chaperone involved in the nucleosome formation and heterochromatin silencing. Required for the deposition of H3K56ac-carrying H3-H4 complex onto newly-replicated DNA. Plays a role in the transcriptional regulation of the cell-cycle dependent histone genes by creating a repressive structure at the core histone gene promoter. This Neurospora crassa (strain ATCC 24698 / 74-OR23-1A / CBS 708.71 / DSM 1257 / FGSC 987) protein is Histone chaperone rtt-106 (rtt-106).